Consider the following 232-residue polypeptide: Large ribosomal subunit protein uL1 (232 aa).

It belongs to the universal ribosomal protein uL1 family. As to quaternary structure, part of the 50S ribosomal subunit.

In terms of biological role, binds directly to 23S rRNA. The L1 stalk is quite mobile in the ribosome, and is involved in E site tRNA release. Its function is as follows. Protein L1 is also a translational repressor protein, it controls the translation of the L11 operon by binding to its mRNA. The sequence is that of Large ribosomal subunit protein uL1 from Azobacteroides pseudotrichonymphae genomovar. CFP2.